A 50-amino-acid polypeptide reads, in one-letter code: Omega-conotoxin Bu8 (50 aa).

Residue Ala1 is a signal peptide. The propeptide occupies 2–24 (EDSRGTQLHRALRKATKLSESTR). 3 cysteine pairs are disulfide-bonded: Cys25–Cys40, Cys32–Cys44, and Cys39–Cys49. Cysteine amide is present on Cys49.

Belongs to the conotoxin O1 superfamily. In terms of tissue distribution, expressed by the venom duct.

Its subcellular location is the secreted. In terms of biological role, omega-conotoxins act at presynaptic membranes, they bind and block voltage-gated calcium channels (Cav). This toxin selectively and potently inhibits depolarization-activated rat Cav2.2/CACNA1B currents (IC(50)=89 nM), when coexpressed with alpha-2/delta-1 (CACNA2D1) and beta-3 (CACNB3) subunits. In vivo, is lethal to fish and displays potent analgesic activity in mice pain models of hot plate and acetic acid writhing but has fewer side effects on mouse motor function and lower toxicity in goldfish. Shows higher or similar analgesic activity in the pain models mentioned above compared to MVIIA, and lower side effects. In addition, it blocks Cav2.2/CACNA1B more rapidly than MVIIA and also dissociates more rapidly. The protein is Omega-conotoxin Bu8 of Conus bullatus (Bubble cone).